A 75-amino-acid chain; its full sequence is Endogenous retrovirus group K member 5 Np9 protein (75 aa).

Positions 22 to 43 (TAPKRQRPSRTGHDDDGGFVEK) are disordered. Residues 32–43 (TGHDDDGGFVEK) show a composition bias toward basic and acidic residues.

It is found in the nucleus. Its function is as follows. May possess a function in tumorigenesis. The protein is Endogenous retrovirus group K member 5 Np9 protein (ERVK-5) of Homo sapiens (Human).